The chain runs to 463 residues: Bifunctional protein HldE (463 aa).

The interval 1–311 (MKKILVVGDL…EEIALILNQT (311 aa)) is ribokinase. 191–194 (NRFE) lines the ATP pocket. The active site involves Asp260. The cytidylyltransferase stretch occupies residues 334–463 (FTNGCFDLLH…IEKIKRTCND (130 aa)).

This sequence in the N-terminal section; belongs to the carbohydrate kinase PfkB family. The protein in the C-terminal section; belongs to the cytidylyltransferase family. As to quaternary structure, homodimer.

It catalyses the reaction D-glycero-beta-D-manno-heptose 7-phosphate + ATP = D-glycero-beta-D-manno-heptose 1,7-bisphosphate + ADP + H(+). The enzyme catalyses D-glycero-beta-D-manno-heptose 1-phosphate + ATP + H(+) = ADP-D-glycero-beta-D-manno-heptose + diphosphate. It functions in the pathway nucleotide-sugar biosynthesis; ADP-L-glycero-beta-D-manno-heptose biosynthesis; ADP-L-glycero-beta-D-manno-heptose from D-glycero-beta-D-manno-heptose 7-phosphate: step 1/4. Its pathway is nucleotide-sugar biosynthesis; ADP-L-glycero-beta-D-manno-heptose biosynthesis; ADP-L-glycero-beta-D-manno-heptose from D-glycero-beta-D-manno-heptose 7-phosphate: step 3/4. Catalyzes the phosphorylation of D-glycero-D-manno-heptose 7-phosphate at the C-1 position to selectively form D-glycero-beta-D-manno-heptose-1,7-bisphosphate. In terms of biological role, catalyzes the ADP transfer from ATP to D-glycero-beta-D-manno-heptose 1-phosphate, yielding ADP-D-glycero-beta-D-manno-heptose. In Helicobacter pylori (strain G27), this protein is Bifunctional protein HldE.